Consider the following 239-residue polypeptide: Pyridoxine 5'-phosphate synthase (239 aa).

Residue asparagine 7 coordinates 3-amino-2-oxopropyl phosphate. Aspartate 9–histidine 10 contributes to the 1-deoxy-D-xylulose 5-phosphate binding site. Arginine 18 serves as a coordination point for 3-amino-2-oxopropyl phosphate. Histidine 43 functions as the Proton acceptor in the catalytic mechanism. The 1-deoxy-D-xylulose 5-phosphate site is built by arginine 45 and histidine 50. The Proton acceptor role is filled by glutamate 70. Threonine 100 contacts 1-deoxy-D-xylulose 5-phosphate. The Proton donor role is filled by histidine 191. 3-amino-2-oxopropyl phosphate-binding positions include glycine 192 and glycine 213–histidine 214.

It belongs to the PNP synthase family. Homooctamer; tetramer of dimers.

Its subcellular location is the cytoplasm. It carries out the reaction 3-amino-2-oxopropyl phosphate + 1-deoxy-D-xylulose 5-phosphate = pyridoxine 5'-phosphate + phosphate + 2 H2O + H(+). Its pathway is cofactor biosynthesis; pyridoxine 5'-phosphate biosynthesis; pyridoxine 5'-phosphate from D-erythrose 4-phosphate: step 5/5. Its function is as follows. Catalyzes the complicated ring closure reaction between the two acyclic compounds 1-deoxy-D-xylulose-5-phosphate (DXP) and 3-amino-2-oxopropyl phosphate (1-amino-acetone-3-phosphate or AAP) to form pyridoxine 5'-phosphate (PNP) and inorganic phosphate. The polypeptide is Pyridoxine 5'-phosphate synthase (Desulforapulum autotrophicum (strain ATCC 43914 / DSM 3382 / VKM B-1955 / HRM2) (Desulfobacterium autotrophicum)).